A 101-amino-acid chain; its full sequence is Aspartyl/glutamyl-tRNA(Asn/Gln) amidotransferase subunit C (101 aa).

It belongs to the GatC family. Heterotrimer of A, B and C subunits.

It catalyses the reaction L-glutamyl-tRNA(Gln) + L-glutamine + ATP + H2O = L-glutaminyl-tRNA(Gln) + L-glutamate + ADP + phosphate + H(+). It carries out the reaction L-aspartyl-tRNA(Asn) + L-glutamine + ATP + H2O = L-asparaginyl-tRNA(Asn) + L-glutamate + ADP + phosphate + 2 H(+). Allows the formation of correctly charged Asn-tRNA(Asn) or Gln-tRNA(Gln) through the transamidation of misacylated Asp-tRNA(Asn) or Glu-tRNA(Gln) in organisms which lack either or both of asparaginyl-tRNA or glutaminyl-tRNA synthetases. The reaction takes place in the presence of glutamine and ATP through an activated phospho-Asp-tRNA(Asn) or phospho-Glu-tRNA(Gln). The chain is Aspartyl/glutamyl-tRNA(Asn/Gln) amidotransferase subunit C from Enterococcus faecalis (strain ATCC 700802 / V583).